Here is a 91-residue protein sequence, read N- to C-terminus: Large ribosomal subunit protein uL23c (91 aa).

The protein belongs to the universal ribosomal protein uL23 family. As to quaternary structure, part of the 50S ribosomal subunit.

The protein resides in the plastid. It localises to the chloroplast. Binds to 23S rRNA. The chain is Large ribosomal subunit protein uL23c (rpl23) from Pinus koraiensis (Korean pine).